Here is a 224-residue protein sequence, read N- to C-terminus: MELYETSPYFYQEPHFYDGENYLPVHLQGFEPPGYERTELSLSPEARGPLEEKGLGTPEHCPGQCLPWACKVCKRKSVSVDRRRAATLREKRRLKKVNEAFEALKRSTLLNPNQRLPKVEILRSAIQYIERLQALLSSLNQEERDLRYRGGGGPQPMVPSECNSHSASCSPEWGNALEFGPNPGDHLLAADPTDAHNLHSLTSIVDSITVEDMSVAFPDETMPN.

Phosphoserine; by CaMK2G occurs at positions 77 and 79. Positions 81-132 constitute a bHLH domain; the sequence is DRRRAATLREKRRLKKVNEAFEALKRSTLLNPNQRLPKVEILRSAIQYIERL. Phosphothreonine; by CaMK2G is present on Thr-87.

As to quaternary structure, homodimer and heterodimer with E12; heterodimerization enhances MYOG DNA-binding and transcriptional activities. Interacts with SMARCA4/BRG1/BAF190A. Interacts (via C-terminal region) with SSRP1 and SUPT16H; the interaction is indicative of an interaction with the FACT complex. nteracts with CSRP3. In terms of processing, phosphorylated by CAMK2G on threonine and serine amino acids in a muscle activity-dependent manner. Phosphorylation of Thr-87 impairs both DNA-binding and trans-activation functions in contracting muscles. In terms of tissue distribution, expressed in myoblast cells. Expressed weakly in myotubes (at protein level). Expressed strongly in denervated muscles and in satellite cells isolated from denervated muscles. Expressed weakly in innervated muscle and in satellite cells isolated from innervated muscles.

Its subcellular location is the nucleus. Acts as a transcriptional activator that promotes transcription of muscle-specific target genes and plays a role in muscle differentiation, cell cycle exit and muscle atrophy. Essential for the development of functional embryonic skeletal fiber muscle differentiation. However is dispensable for postnatal skeletal muscle growth; phosphorylation by CAMK2G inhibits its transcriptional activity in respons to muscle activity. Required for the recruitment of the FACT complex to muscle-specific promoter regions, thus promoting gene expression initiation. During terminal myoblast differentiation, plays a role as a strong activator of transcription at loci with an open chromatin structure previously initiated by MYOD1. Together with MYF5 and MYOD1, co-occupies muscle-specific gene promoter core regions during myogenesis. Also cooperates with myocyte-specific enhancer factor MEF2D and BRG1-dependent recruitment of SWI/SNF chromatin-remodeling enzymes to alter chromatin structure at myogenic late gene promoters. Facilitates cell cycle exit during terminal muscle differentiation through the up-regulation of miR-20a expression, which in turn represses genes involved in cell cycle progression. Binds to the E-box containing (E1) promoter region of the miR-20a gene. Also plays a role in preventing reversal of muscle cell differentiation. Contributes to the atrophy-related gene expression in adult denervated muscles. Induces fibroblasts to differentiate into myoblasts. The sequence is that of Myogenin (Myog) from Mus musculus (Mouse).